Here is a 517-residue protein sequence, read N- to C-terminus: MAVSRKDWSALSSLARQRTLEDEEEQERERRRRHRNLSSTTDDEAPRLSQNGDRQASASERLPSVEEAEVPKPLPPASKDEDEDIQSILRTRQERRQRRQVVEAAQAPIQERLEAEEGRNSLSPVQATQKPLVSKKELEIPPRRRLSREQRGPWALEEESLVGREPEERKKGVPEKSPVLEKSSMPKKTAPEKSLVSDKTSISEKVLASEKTSLSEKIAVSEKRNSSEKKSVLEKTSVSEKSLAPGMALGSGRRLVSEKASIFEKALASEKSPTADAKPAPKRATASEQPLAQEPPASGGSPATTKEQRGRALPGKNLPSLAKQGASDPPTVASRLPPVTLQVKIPSKEEEADMSSPTQRTYSSSLKRSSPRTISFRMKPKKENSETTLTRSASMKLPDNTVKLGEKLERYHTAIRRSESVKSRGLPCTELFVAPVGVASKRHLFEKELAGQSRAEPASSRKENLRLSGVVTSRLNLWISRTQESGDQDPQEAQKASSATERTQWGQKSDSSLDAEV.

The interval 1-401 (MAVSRKDWSA…SASMKLPDNT (401 aa)) is disordered. Ser-38 carries the post-translational modification Phosphoserine. Residues 48–58 (LSQNGDRQASA) are compositionally biased toward polar residues. Ser-64, Ser-78, Ser-121, and Ser-123 each carry phosphoserine. Positions 120 to 131 (NSLSPVQATQKP) are enriched in polar residues. Composition is skewed to basic and acidic residues over residues 134-151 (SKKE…REQR) and 161-174 (LVGR…KGVP). 8 SEK repeats span residues 203-205 (SEK), 209-211 (SEK), 215-217 (SEK), 221-223 (SEK), 227-229 (SEK), 239-241 (SEK), 257-259 (SEK), and 269-271 (SEK). Residues 203 to 271 (SEKVLASEKT…IFEKALASEK (69 aa)) are 8 X SEK repeats. Basic and acidic residues predominate over residues 219-233 (AVSEKRNSSEKKSVL). A phosphoserine mark is found at Ser-347, Ser-356, and Ser-394. Polar residues predominate over residues 355–373 (SSPTQRTYSSSLKRSSPRT). Arg-424 is subject to Omega-N-methylarginine. Residues 481-517 (RTQESGDQDPQEAQKASSATERTQWGQKSDSSLDAEV) form a disordered region. Residue Ser-485 is modified to Phosphoserine. The span at 494–517 (QKASSATERTQWGQKSDSSLDAEV) shows a compositional bias: polar residues.

It localises to the secreted. Its subcellular location is the extracellular space. The protein localises to the extracellular matrix. It is found in the basement membrane. Anchoring filament protein which is a component of the basement membrane zone. This is Ladinin-1 (LAD1) from Homo sapiens (Human).